A 1394-amino-acid chain; its full sequence is DNA-directed RNA polymerase subunit beta'' (1394 aa).

Residues Cys224, Cys295, Cys302, and Cys305 each coordinate Zn(2+).

Belongs to the RNA polymerase beta' chain family. RpoC2 subfamily. As to quaternary structure, in plastids the minimal PEP RNA polymerase catalytic core is composed of four subunits: alpha, beta, beta', and beta''. When a (nuclear-encoded) sigma factor is associated with the core the holoenzyme is formed, which can initiate transcription. The cofactor is Zn(2+).

The protein resides in the plastid. Its subcellular location is the chloroplast. It catalyses the reaction RNA(n) + a ribonucleoside 5'-triphosphate = RNA(n+1) + diphosphate. In terms of biological role, DNA-dependent RNA polymerase catalyzes the transcription of DNA into RNA using the four ribonucleoside triphosphates as substrates. This Cucumis sativus (Cucumber) protein is DNA-directed RNA polymerase subunit beta''.